The chain runs to 216 residues: Somatotropin (216 aa).

The N-terminal stretch at 1-26 (MATGSQTSWLLTFTLLCLPWPQEAGA) is a signal peptide. Residue H45 coordinates Zn(2+). Cysteines 78 and 189 form a disulfide. S131 is modified (phosphoserine). Zn(2+) is bound at residue E198. C206 and C214 are disulfide-bonded.

The protein belongs to the somatotropin/prolactin family.

It is found in the secreted. Plays an important role in growth control. Its major role in stimulating body growth is to stimulate the liver and other tissues to secrete IGF1. It stimulates both the differentiation and proliferation of myoblasts. It also stimulates amino acid uptake and protein synthesis in muscle and other tissues. This is Somatotropin (GH1) from Spalax ehrenbergi (Middle East blind mole rat).